The sequence spans 119 residues: Large ribosomal subunit protein bL20 (119 aa).

The protein belongs to the bacterial ribosomal protein bL20 family.

Binds directly to 23S ribosomal RNA and is necessary for the in vitro assembly process of the 50S ribosomal subunit. It is not involved in the protein synthesizing functions of that subunit. The sequence is that of Large ribosomal subunit protein bL20 from Rhodopseudomonas palustris (strain ATCC BAA-98 / CGA009).